A 409-amino-acid chain; its full sequence is Serine/threonine transporter SstT (409 aa).

Transmembrane regions (helical) follow at residues 24–44 (LALG…AGLF), 48–68 (FVGA…AATI), 82–102 (IIVL…IAGM), 142–162 (AIAN…GAAL), 194–214 (LGIF…ALAG), 218–238 (LLAV…PAIV), 292–312 (IPLG…VLAM), and 319–339 (GITV…VSAC).

It belongs to the dicarboxylate/amino acid:cation symporter (DAACS) (TC 2.A.23) family.

Its subcellular location is the cell inner membrane. The catalysed reaction is L-serine(in) + Na(+)(in) = L-serine(out) + Na(+)(out). It carries out the reaction L-threonine(in) + Na(+)(in) = L-threonine(out) + Na(+)(out). Involved in the import of serine and threonine into the cell, with the concomitant import of sodium (symport system). The chain is Serine/threonine transporter SstT from Neisseria meningitidis serogroup B (strain ATCC BAA-335 / MC58).